Reading from the N-terminus, the 512-residue chain is FACT complex subunit pob3 (512 aa).

The span at 460-504 (LDDEDEEGDEEMEEALSEDEDFQAESESDVAEEYDENAESSDEEG) shows a compositional bias: acidic residues. The segment at 460 to 512 (LDDEDEEGDEEMEEALSEDEDFQAESESDVAEEYDENAESSDEEGASGAEGSE) is disordered.

The protein belongs to the SSRP1 family. In terms of assembly, forms a stable heterodimer with spt16. The spt16-pob3 dimer weakly associates with multiple molecules of nhp6 to form the FACT complex. Interacts with abo1.

The protein localises to the nucleus. It is found in the chromosome. In terms of biological role, component of the FACT complex, a general chromatin factor that acts to reorganize nucleosomes. The FACT complex is involved in multiple processes that require DNA as a template such as mRNA elongation, DNA replication and DNA repair. During transcription elongation the FACT complex acts as a histone chaperone that both destabilizes and restores nucleosomal structure. It facilitates the passage of RNA polymerase II and transcription by promoting the dissociation of one histone H2A-H2B dimer from the nucleosome, then subsequently promotes the reestablishment of the nucleosome following the passage of RNA polymerase II. This is FACT complex subunit pob3 from Schizosaccharomyces pombe (strain 972 / ATCC 24843) (Fission yeast).